Reading from the N-terminus, the 354-residue chain is Eukaryotic translation initiation factor 3 subunit H (354 aa).

A disordered region spans residues 1-28; it reads MATRQPYQKKFQSRDQREQTSSQQAPNS. Polar residues predominate over residues 19-28; it reads QTSSQQAPNS. The 142-residue stretch at 33–174 folds into the MPN domain; sequence VTVDALVVMK…LSAFRLSNKA (142 aa).

Belongs to the eIF-3 subunit H family. As to quaternary structure, component of the eukaryotic translation initiation factor 3 (eIF-3) complex.

It localises to the cytoplasm. Functionally, component of the eukaryotic translation initiation factor 3 (eIF-3) complex, which is involved in protein synthesis of a specialized repertoire of mRNAs and, together with other initiation factors, stimulates binding of mRNA and methionyl-tRNAi to the 40S ribosome. The eIF-3 complex specifically targets and initiates translation of a subset of mRNAs involved in cell proliferation. This chain is Eukaryotic translation initiation factor 3 subunit H, found in Monosiga brevicollis (Choanoflagellate).